We begin with the raw amino-acid sequence, 330 residues long: Biotin synthase (330 aa).

Positions 53–276 (NNIRLNVLLS…VFPFKELRLS (224 aa)) constitute a Radical SAM core domain. [4Fe-4S] cluster-binding residues include Cys-68, Cys-72, and Cys-75. 4 residues coordinate [2Fe-2S] cluster: Cys-112, Cys-144, Cys-204, and Arg-274.

The protein belongs to the radical SAM superfamily. Biotin synthase family. In terms of assembly, homodimer. Requires [4Fe-4S] cluster as cofactor. It depends on [2Fe-2S] cluster as a cofactor.

It carries out the reaction (4R,5S)-dethiobiotin + (sulfur carrier)-SH + 2 reduced [2Fe-2S]-[ferredoxin] + 2 S-adenosyl-L-methionine = (sulfur carrier)-H + biotin + 2 5'-deoxyadenosine + 2 L-methionine + 2 oxidized [2Fe-2S]-[ferredoxin]. It participates in cofactor biosynthesis; biotin biosynthesis; biotin from 7,8-diaminononanoate: step 2/2. Its function is as follows. Catalyzes the conversion of dethiobiotin (DTB) to biotin by the insertion of a sulfur atom into dethiobiotin via a radical-based mechanism. The polypeptide is Biotin synthase (Streptococcus agalactiae serotype V (strain ATCC BAA-611 / 2603 V/R)).